The chain runs to 263 residues: Aquaporin-8 (263 aa).

The Cytoplasmic portion of the chain corresponds to 1–38 (MSGEQTPMCSMDLREIKGKETNMADSYHGMSWYEQYIQ). A helical membrane pass occupies residues 39–59 (PCVVELLGSALFIFIGCLSVI). Cysteine persulfide is present on Cys-55. Position 55 is a cysteine sulfenic acid (-SOH) (Cys-55). Residues 60–86 (ENSPNTGLLQPALAHGLALGLIIATLG) are Extracellular-facing. The chain crosses the membrane as a helical span at residues 87 to 107 (NISGGHFNPAVSLAVTLVGGL). The NPA 1 signature appears at 94–96 (NPA). Topologically, residues 108 to 109 (KT) are cytoplasmic. The chain crosses the membrane as a helical span at residues 110-130 (MLLIPYWVSQLFGGMIGAALA). The Extracellular portion of the chain corresponds to 131-158 (KVVSPEERFWNASGAAFAIVQEQEQVAE). A glycan (N-linked (GlcNAc...) asparagine) is linked at Asn-141. Residues 159–179 (ALGVEIVMTMLLVLAVCMGAV) form a helical membrane-spanning segment. Topologically, residues 180 to 185 (NEKTMG) are cytoplasmic. Residues 186–206 (PLAPFSIGFSVIVDILAGGGI) traverse the membrane as a helical segment. Residues 207–230 (SGACMNPARAFGPAVMAGYWDFHW) are Extracellular-facing. Residues 212 to 214 (NPA) carry the NPA 2 motif. Residues 231-251 (IYWLGPLLAGLFVGLLIRLFI) form a helical membrane-spanning segment. The Cytoplasmic portion of the chain corresponds to 252-263 (GDEKTRLILKSR).

It belongs to the MIP/aquaporin (TC 1.A.8) family. In terms of processing, N-glycosylated. Post-translationally, sulfenylation at Cys-55(C55-SOH) when hydrogen peroxide flows through the AQP8 channel, making it susceptible to hydrogen sulfide produced by CBS. Persulfidation at Cys-55 is required to gate AQP8 channel; under stress condition, hydrogen peroxide accumulates in the cell leading to CBS activation that produces hydrogen sulfide inducing persulfidation of oxidized Cys-55 (C55-SOH). As to expression, highly expressed in sperm, pancreas and liver. Expressed in hepatocytes, acinal cells of pancreas and salivary gland, and absorptive colonic epithelial cells. Expressed in the myoepithelium of submandibular and parotid glands. Expressed in pancreatic beta-cells. Expressed in testis but not in epididymis. Expressed in small intestine.

It is found in the cell membrane. The protein localises to the mitochondrion inner membrane. Its subcellular location is the apical cell membrane. The protein resides in the basolateral cell membrane. It localises to the smooth endoplasmic reticulum membrane. The catalysed reaction is H2O(in) = H2O(out). It carries out the reaction NH4(+)(in) = NH4(+)(out). The enzyme catalyses H2O2(out) = H2O2(in). It catalyses the reaction formamide(out) = formamide(in). The catalysed reaction is methylamine(out) = methylamine(in). Its activity is regulated as follows. Reversibly gated by a two-step sulfenylation-persulfidation process in cells undergoing diverse stresses. Functionally, channel that allows the facilitated permeation of water and uncharged molecules, such as hydrogen peroxide and the neutral form of ammonia (NH3), through cellular membranes such as plasma membrane, inner mitochondrial membrane and endoplasmic reticulum membrane of several tissues. The transport of ammonia neutral form induces a parallel transport of proton, at alkaline pH when the concentration of ammonia is high. However, it is unclear whether the transport of proton takes place via the aquaporin or via an endogenous pathway. Also, may transport ammonia analogs such as formamide and methylamine, a transport favourited at basic pH due to the increase of unprotonated (neutral) form, which is expected to favor diffusion. Does not transport urea or glycerol. The water transport mechanism is mercury- and copper-sensitive and passive in response to osmotic driving forces. At the canicular plasma membrane, mediates the osmotic transport of water toward the bile canaliculus and facilitates the cAMP-induced bile canalicular water secretion, a process involved in bile formation. In addition, mediates the hydrogen peroxide release from hepatocyte mitochondria that modulates the SREBF2-mediated cholesterol synthesis and facilitates the mitochondrial ammonia uptake which is metabolized into urea, mainly under glucagon stimulation. In B cells, transports the CYBB-generated hydrogen peroxide from the external leaflet of the plasma membrane to the cytosol to promote B cell activation and differentiation for signal amplification. In the small intestine and colon system, mediates water transport through mitochondria and apical membrane of epithelial cells. May play an important role in the adaptive response of proximal tubule cells to acidosis possibly facilitating mitochondrial ammonia transport. The chain is Aquaporin-8 from Rattus norvegicus (Rat).